A 365-amino-acid polypeptide reads, in one-letter code: Probable dual-specificity RNA methyltransferase RlmN (365 aa).

Glutamate 108 (proton acceptor) is an active-site residue. Residues histidine 114–aspartate 347 form the Radical SAM core domain. The cysteines at positions 121 and 352 are disulfide-linked. Residues cysteine 128, cysteine 132, and cysteine 135 each contribute to the [4Fe-4S] cluster site. S-adenosyl-L-methionine is bound by residues glycine 178 to glutamate 179, serine 210, serine 233 to histidine 235, and asparagine 309. Catalysis depends on cysteine 352, which acts as the S-methylcysteine intermediate.

It belongs to the radical SAM superfamily. RlmN family. [4Fe-4S] cluster serves as cofactor.

The protein localises to the cytoplasm. It catalyses the reaction adenosine(2503) in 23S rRNA + 2 reduced [2Fe-2S]-[ferredoxin] + 2 S-adenosyl-L-methionine = 2-methyladenosine(2503) in 23S rRNA + 5'-deoxyadenosine + L-methionine + 2 oxidized [2Fe-2S]-[ferredoxin] + S-adenosyl-L-homocysteine. The catalysed reaction is adenosine(37) in tRNA + 2 reduced [2Fe-2S]-[ferredoxin] + 2 S-adenosyl-L-methionine = 2-methyladenosine(37) in tRNA + 5'-deoxyadenosine + L-methionine + 2 oxidized [2Fe-2S]-[ferredoxin] + S-adenosyl-L-homocysteine. Functionally, specifically methylates position 2 of adenine 2503 in 23S rRNA and position 2 of adenine 37 in tRNAs. This Geobacillus kaustophilus (strain HTA426) protein is Probable dual-specificity RNA methyltransferase RlmN.